A 388-amino-acid polypeptide reads, in one-letter code: Succinate--CoA ligase [ADP-forming] subunit beta (388 aa).

The region spanning 9–244 (KQLFKEFGLP…PSQDDAREAE (236 aa)) is the ATP-grasp domain. Residues Lys-46, 53–55 (GRG), Glu-99, Thr-102, and Glu-107 contribute to the ATP site. Residues Asn-199 and Asp-213 each coordinate Mg(2+). Residues Asn-264 and 321 to 323 (GIV) each bind substrate.

Belongs to the succinate/malate CoA ligase beta subunit family. In terms of assembly, heterotetramer of two alpha and two beta subunits. The cofactor is Mg(2+).

It carries out the reaction succinate + ATP + CoA = succinyl-CoA + ADP + phosphate. The catalysed reaction is GTP + succinate + CoA = succinyl-CoA + GDP + phosphate. The protein operates within carbohydrate metabolism; tricarboxylic acid cycle; succinate from succinyl-CoA (ligase route): step 1/1. Functionally, succinyl-CoA synthetase functions in the citric acid cycle (TCA), coupling the hydrolysis of succinyl-CoA to the synthesis of either ATP or GTP and thus represents the only step of substrate-level phosphorylation in the TCA. The beta subunit provides nucleotide specificity of the enzyme and binds the substrate succinate, while the binding sites for coenzyme A and phosphate are found in the alpha subunit. This chain is Succinate--CoA ligase [ADP-forming] subunit beta, found in Idiomarina loihiensis (strain ATCC BAA-735 / DSM 15497 / L2-TR).